Here is a 195-residue protein sequence, read N- to C-terminus: SXP/RAL-2-like protein 2 (195 aa).

The segment at 162 to 195 (EKVHGGSHGGLRGGPGGPRDGPRGGPRGGPRGGR) is disordered. Residues 167–195 (GSHGGLRGGPGGPRDGPRGGPRGGPRGGR) are compositionally biased toward gly residues.

Belongs to the SXP/RAL-2 family.

The chain is SXP/RAL-2-like protein 2 from Caenorhabditis elegans.